The following is a 594-amino-acid chain: Dictomallein-4 (594 aa).

The signal sequence occupies residues 1–18 (MKLVLIFLIINFLLIINC). The 262-residue stretch at 147–408 (PDVSQDYTLK…QNYFKNSIYY (262 aa)) folds into the Peptidase M66 domain. His-300 is a Zn(2+) binding site. The active site involves Glu-301. 2 residues coordinate Zn(2+): His-304 and His-310.

The protein belongs to the dictomallein family. Zn(2+) is required as a cofactor.

It localises to the secreted. The sequence is that of Dictomallein-4 (dtmlD) from Dictyostelium discoideum (Social amoeba).